A 317-amino-acid chain; its full sequence is UV DNA damage endonuclease (317 aa).

The protein belongs to the uve1/UvsE family.

Component in a DNA repair pathway. Removal of UV LIGHT damaged nucleotides. Recognizes pyrimidine dimers and cleave a phosphodiester bond immediately 5' to the lesion. This chain is UV DNA damage endonuclease, found in Bacillus cereus (strain B4264).